Reading from the N-terminus, the 125-residue chain is Histone H2A (125 aa).

Basic residues predominate over residues 1–18 (MSGRGKGGKAKAKAKSRS). Positions 1–21 (MSGRGKGGKAKAKAKSRSSRA) are disordered. S2 carries the N-acetylserine modification. An N5-methylglutamine modification is found at Q104.

This sequence belongs to the histone H2A family. As to quaternary structure, the nucleosome is a histone octamer containing two molecules each of H2A, H2B, H3 and H4 assembled in one H3-H4 heterotetramer and two H2A-H2B heterodimers. The octamer wraps approximately 147 bp of DNA.

The protein localises to the nucleus. The protein resides in the chromosome. Core component of nucleosome. Nucleosomes wrap and compact DNA into chromatin, limiting DNA accessibility to the cellular machineries which require DNA as a template. Histones thereby play a central role in transcription regulation, DNA repair, DNA replication and chromosomal stability. DNA accessibility is regulated via a complex set of post-translational modifications of histones, also called histone code, and nucleosome remodeling. The sequence is that of Histone H2A from Mytilus californianus (California mussel).